Here is an 86-residue protein sequence, read N- to C-terminus: Large ribosomal subunit protein bL27 (86 aa).

The tract at residues 1 to 21 is disordered; it reads MAHKKGASSSRNGRDSAAQRL.

It belongs to the bacterial ribosomal protein bL27 family.

In Mycobacterium tuberculosis (strain CDC 1551 / Oshkosh), this protein is Large ribosomal subunit protein bL27 (rpmA).